A 219-amino-acid polypeptide reads, in one-letter code: Protein-L-isoaspartate O-methyltransferase 2 (219 aa).

Residue Ser-66 is part of the active site.

It belongs to the methyltransferase superfamily. L-isoaspartyl/D-aspartyl protein methyltransferase family.

The protein localises to the cytoplasm. It catalyses the reaction [protein]-L-isoaspartate + S-adenosyl-L-methionine = [protein]-L-isoaspartate alpha-methyl ester + S-adenosyl-L-homocysteine. Catalyzes the methyl esterification of L-isoaspartyl residues in peptides and proteins that result from spontaneous decomposition of normal L-aspartyl and L-asparaginyl residues. It plays a role in the repair and/or degradation of damaged proteins. In Marinobacter nauticus (strain ATCC 700491 / DSM 11845 / VT8) (Marinobacter aquaeolei), this protein is Protein-L-isoaspartate O-methyltransferase 2.